The following is a 389-amino-acid chain: 1-acyl-sn-glycerol-3-phosphate acyltransferase 2 (389 aa).

A helical transmembrane segment spans residues 2 to 22 (VIAAAVIVPLGLLFFISGLAV). Residues 91–96 (HRSDID) carry the HXXXXD motif motif. A run of 2 helical transmembrane segments spans residues 305–325 (LAVV…FLHW) and 333–353 (KGIT…QILI). Positions 357-389 (QSERSTPAKVVPAKPKDNHHPESSSQTETEKEK) are disordered. A compositionally biased stretch (basic and acidic residues) spans 370–389 (KPKDNHHPESSSQTETEKEK).

It belongs to the 1-acyl-sn-glycerol-3-phosphate acyltransferase family. As to quaternary structure, interacts with GPAT9 and DGAT1. As to expression, present in roots, leaves, stems, floral buds and siliques (at protein level). Widely expressed. In contrast to LPAT1, it is not expressed at higher level in leaves.

The protein resides in the endoplasmic reticulum membrane. It carries out the reaction a 1-acyl-sn-glycero-3-phosphate + an acyl-CoA = a 1,2-diacyl-sn-glycero-3-phosphate + CoA. The protein operates within phospholipid metabolism; CDP-diacylglycerol biosynthesis; CDP-diacylglycerol from sn-glycerol 3-phosphate: step 2/3. Its function is as follows. Converts lysophosphatidic acid (LPA) into phosphatidic acid by incorporating acyl moiety at the 2 position. Has preference for C-18-CoA substrates compared to C-16-CoA substrates. Required for female but not male gametophyte development. This chain is 1-acyl-sn-glycerol-3-phosphate acyltransferase 2 (LPAT2), found in Arabidopsis thaliana (Mouse-ear cress).